The following is a 290-amino-acid chain: 6-phospho-5-dehydro-2-deoxy-D-gluconate aldolase (290 aa).

Asp-85 serves as the catalytic Proton donor. 2 residues coordinate Zn(2+): His-86 and His-180. A dihydroxyacetone phosphate-binding site is contributed by Gly-181. Position 208 (His-208) interacts with Zn(2+). Residues 209–211 (GAS) and 230–233 (NINT) contribute to the dihydroxyacetone phosphate site. Thr-233 carries the post-translational modification Phosphothreonine.

Belongs to the class II fructose-bisphosphate aldolase family. IolJ subfamily. It depends on Zn(2+) as a cofactor.

It catalyses the reaction 6-phospho-5-dehydro-2-deoxy-D-gluconate = 3-oxopropanoate + dihydroxyacetone phosphate. It functions in the pathway polyol metabolism; myo-inositol degradation into acetyl-CoA; acetyl-CoA from myo-inositol: step 6/7. Functionally, produces dihydroxyacetone phosphate (DHAP or glycerone phosphate) and malonic semialdehyde (MSA or 3-oxopropanoate) from 6-phospho-5-dehydro-2-deoxy-D-gluconate (DKGP). This chain is 6-phospho-5-dehydro-2-deoxy-D-gluconate aldolase (iolJ), found in Bacillus velezensis (strain DSM 23117 / BGSC 10A6 / LMG 26770 / FZB42) (Bacillus amyloliquefaciens subsp. plantarum).